Here is a 131-residue protein sequence, read N- to C-terminus: Large ribosomal subunit protein bL19 (131 aa).

It belongs to the bacterial ribosomal protein bL19 family.

In terms of biological role, this protein is located at the 30S-50S ribosomal subunit interface and may play a role in the structure and function of the aminoacyl-tRNA binding site. The sequence is that of Large ribosomal subunit protein bL19 from Synechococcus sp. (strain CC9902).